We begin with the raw amino-acid sequence, 347 residues long: Protein NDL3 (347 aa).

Belongs to the NDRG family. Interacts with the heterodimers formed by GB1 and GG1, or GB1 and GG2. Interacts with RGS1.

The protein resides in the cytoplasm. Involved in a signaling pathway that modulates root auxin transport and auxin gradients. Acts partially by positively regulating the auxin carrier PIN2 and AUX1. Acts, together with GB1 as positive regulator of meristem initiation and branching. GB1 and NDL3 positively regulate basipetal inflorescence auxin transport and modulate MAX2 expression in shoots, which regulates organ and lateral meristem formation by the establishment and maintenance of auxin gradients. This Arabidopsis thaliana (Mouse-ear cress) protein is Protein NDL3.